The primary structure comprises 315 residues: Ribose-phosphate pyrophosphokinase (315 aa).

ATP-binding positions include 37–39 (DSE) and 96–97 (RQ). His131 and Asp170 together coordinate Mg(2+). The active site involves Lys194. D-ribose 5-phosphate is bound by residues Arg196, Asp220, and 224–228 (DTGGT).

Belongs to the ribose-phosphate pyrophosphokinase family. Class I subfamily. In terms of assembly, homohexamer. Requires Mg(2+) as cofactor.

Its subcellular location is the cytoplasm. The enzyme catalyses D-ribose 5-phosphate + ATP = 5-phospho-alpha-D-ribose 1-diphosphate + AMP + H(+). Its pathway is metabolic intermediate biosynthesis; 5-phospho-alpha-D-ribose 1-diphosphate biosynthesis; 5-phospho-alpha-D-ribose 1-diphosphate from D-ribose 5-phosphate (route I): step 1/1. Functionally, involved in the biosynthesis of the central metabolite phospho-alpha-D-ribosyl-1-pyrophosphate (PRPP) via the transfer of pyrophosphoryl group from ATP to 1-hydroxyl of ribose-5-phosphate (Rib-5-P). The sequence is that of Ribose-phosphate pyrophosphokinase from Marinomonas sp. (strain MWYL1).